The following is a 426-amino-acid chain: Serine--tRNA ligase (426 aa).

233-235 (TAE) contacts L-serine. An ATP-binding site is contributed by 264-266 (RSE). Glutamate 287 provides a ligand contact to L-serine. 351 to 354 (EISS) is an ATP binding site. L-serine is bound at residue serine 387.

This sequence belongs to the class-II aminoacyl-tRNA synthetase family. Type-1 seryl-tRNA synthetase subfamily. Homodimer. The tRNA molecule binds across the dimer.

The protein localises to the cytoplasm. It catalyses the reaction tRNA(Ser) + L-serine + ATP = L-seryl-tRNA(Ser) + AMP + diphosphate + H(+). It carries out the reaction tRNA(Sec) + L-serine + ATP = L-seryl-tRNA(Sec) + AMP + diphosphate + H(+). It functions in the pathway aminoacyl-tRNA biosynthesis; selenocysteinyl-tRNA(Sec) biosynthesis; L-seryl-tRNA(Sec) from L-serine and tRNA(Sec): step 1/1. Catalyzes the attachment of serine to tRNA(Ser). Is also able to aminoacylate tRNA(Sec) with serine, to form the misacylated tRNA L-seryl-tRNA(Sec), which will be further converted into selenocysteinyl-tRNA(Sec). In Pseudomonas putida (strain GB-1), this protein is Serine--tRNA ligase.